A 310-amino-acid polypeptide reads, in one-letter code: Olfactory receptor 4K14 (310 aa).

Topologically, residues 1–25 (MDPQNYSLVSEFVLHGLCTSRHLQN) are extracellular. Asn-5 carries an N-linked (GlcNAc...) asparagine glycan. The helical transmembrane segment at 26-49 (FFFIFFFGVYVAIMLGNLLILVTV) threads the bilayer. Residues 50–58 (ISDPCLHSS) lie on the Cytoplasmic side of the membrane. The helical transmembrane segment at 59–80 (PMYFLLGNLAFLDMWLASFATP) threads the bilayer. At 81 to 101 (KMIRDFLSDQKLISFGGCMAQ) the chain is on the extracellular side. Cys-98 and Cys-190 form a disulfide bridge. The chain crosses the membrane as a helical span at residues 102 to 121 (IFFLHFTGGAEMVLLVSMAY). Topologically, residues 122-140 (DRYVAICKPLHYMTLMSWQ) are cytoplasmic. Residues 141-159 (TCIRLVLASWVVGFVHSIS) form a helical membrane-spanning segment. Topologically, residues 160 to 196 (QVAFTVNLPYCGPNEVDSFFCDLPLVIKLACMDTYVL) are extracellular. Residues 197-220 (GIIMISDSGLLSLSCFLLLLISYT) form a helical membrane-spanning segment. Residues 221-236 (VILLAIRQRAAGSTSK) lie on the Cytoplasmic side of the membrane. The chain crosses the membrane as a helical span at residues 237 to 259 (ALSTCSAHIMVVTLFFGPCIFVY). The Extracellular portion of the chain corresponds to 260 to 270 (VRPFSRFSVDK). A helical membrane pass occupies residues 271 to 290 (LLSVFYTIFTPLLNPIIYTL). Residues 291–310 (RNEEMKAAMKKLQNRRVTFQ) lie on the Cytoplasmic side of the membrane.

This sequence belongs to the G-protein coupled receptor 1 family.

It is found in the cell membrane. In terms of biological role, odorant receptor. The polypeptide is Olfactory receptor 4K14 (OR4K14) (Homo sapiens (Human)).